Here is a 216-residue protein sequence, read N- to C-terminus: Hexitol phosphatase A (216 aa).

Catalysis depends on Asp9, which acts as the Nucleophile. Asp9 and Asp11 together coordinate a divalent metal cation. Residues 9–11, 106–107, and Lys138 contribute to the substrate site; these read DLD and TS. The Proton donor role is filled by Asp11. Position 163 (Asp163) interacts with a divalent metal cation.

This sequence belongs to the HAD-like hydrolase superfamily. CbbY/CbbZ/Gph/YieH family. Requires Mg(2+) as cofactor. Mn(2+) serves as cofactor. It depends on Co(2+) as a cofactor.

The catalysed reaction is sugar phosphate + H2O = sugar + phosphate.. It carries out the reaction D-mannitol 1-phosphate + H2O = D-mannitol + phosphate. The enzyme catalyses D-sorbitol 6-phosphate + H2O = D-sorbitol + phosphate. In terms of biological role, sugar-phosphate phosphohydrolase that appears to contribute to butanol tolerance. Catalyzes the dephosphorylation of D-mannitol 1-phosphate and D-sorbitol 6-phosphate. Is also able to dephosphorylate other sugar phosphates in vitro including ribose-5-phosphate (Rib5P), 2-deoxyribose-5-phosphate, fructose-1-phosphate (Fru1P), fructose-6-phosphate (Fru6P), and glucose-6-phosphate (Glu6P). Selectively hydrolyzes beta-D-glucose-1-phosphate (bGlu1P) and has no activity with the alpha form. The chain is Hexitol phosphatase A from Escherichia coli (strain K12).